A 422-amino-acid chain; its full sequence is Secernin-3 (422 aa).

A propeptide spanning residues 1-5 is cleaved from the precursor; that stretch reads MEPCS. Residue Cys6 is part of the active site. A Glyoxylic acid (Cys); alternate modification is found at Cys6. A Pyruvic acid (Cys); alternate modification is found at Cys6.

The protein belongs to the peptidase C69 family. Secernin subfamily.

Functionally, plays a role in thermal nociception. In Bos taurus (Bovine), this protein is Secernin-3 (SCRN3).